A 497-amino-acid chain; its full sequence is Glycerol kinase (497 aa).

Thr-11 contacts ADP. ATP is bound by residues Thr-11, Ser-12, and Ser-13. Sn-glycerol 3-phosphate is bound at residue Thr-11. Arg-15 contributes to the ADP binding site. 4 residues coordinate sn-glycerol 3-phosphate: Arg-81, Glu-82, Tyr-133, and Asp-242. Arg-81, Glu-82, Tyr-133, Asp-242, and Gln-243 together coordinate glycerol. The ADP site is built by Thr-264 and Gly-307. Residues Thr-264, Gly-307, Gln-311, and Gly-412 each coordinate ATP. Positions 412 and 416 each coordinate ADP.

This sequence belongs to the FGGY kinase family.

The enzyme catalyses glycerol + ATP = sn-glycerol 3-phosphate + ADP + H(+). It participates in polyol metabolism; glycerol degradation via glycerol kinase pathway; sn-glycerol 3-phosphate from glycerol: step 1/1. With respect to regulation, inhibited by fructose 1,6-bisphosphate (FBP). In terms of biological role, key enzyme in the regulation of glycerol uptake and metabolism. Catalyzes the phosphorylation of glycerol to yield sn-glycerol 3-phosphate. This is Glycerol kinase from Polaromonas sp. (strain JS666 / ATCC BAA-500).